The following is a 242-amino-acid chain: Probable transcriptional regulatory protein XCV3282 (242 aa).

It belongs to the TACO1 family.

It localises to the cytoplasm. This chain is Probable transcriptional regulatory protein XCV3282, found in Xanthomonas euvesicatoria pv. vesicatoria (strain 85-10) (Xanthomonas campestris pv. vesicatoria).